The sequence spans 188 residues: MGKTADNHGPVRSETAREGRENQVYSPVTGARLVAGCICLTPDKKQVLMITSSAHKKRWIVPKGGVEKDEPNYETTAQRETWEEAGCIGKIVANLGTVEDMRPPKDWNKDIKQFENSRKDSEVAKHPPRTEFHFYELEIENLLDKFPECHKRHRKLYSYTEAKQNLIDAKRPELLEALNRSAIIKDDK.

A compositionally biased stretch (basic and acidic residues) spans 1-21 (MGKTADNHGPVRSETAREGRE). Positions 1 to 23 (MGKTADNHGPVRSETAREGRENQ) are disordered. One can recognise a Nudix hydrolase domain in the interval 30-179 (GARLVAGCIC…KRPELLEALN (150 aa)). Residues arginine 32, serine 52, serine 53, and lysine 63 each contribute to the 1D-myo-inositol hexakisphosphate site. Arginine 32, serine 52, serine 53, and lysine 63 together coordinate 5-diphospho-1D-myo-inositol 1,2,3,4,6-pentakisphosphate. Residues arginine 32, serine 52, serine 53, and lysine 63 each coordinate P(1),P(5)-bis(5'-adenosyl) pentaphosphate. Lysine 63, glutamate 80, and glutamate 84 together coordinate Mg(2+). A Nudix box motif is present at residues 65–86 (GVEKDEPNYETTAQRETWEEAG). Aspartate 100 is a binding site for P(1),P(5)-bis(5'-adenosyl) pentaphosphate. Positions 102, 129, 152, and 171 each coordinate 1D-myo-inositol hexakisphosphate. Arginine 102 is a 5-diphospho-1D-myo-inositol 1,2,3,4,6-pentakisphosphate binding site. 2 residues coordinate 5-diphospho-1D-myo-inositol 1,2,3,4,6-pentakisphosphate: arginine 152 and arginine 171. Positions 152, 171, and 173 each coordinate P(1),P(5)-bis(5'-adenosyl) pentaphosphate.

The protein belongs to the Nudix hydrolase family. DIPP subfamily. It depends on Mg(2+) as a cofactor. The cofactor is Mn(2+). Requires Zn(2+) as cofactor.

The protein resides in the cytoplasm. It is found in the nucleus. It catalyses the reaction diphospho-myo-inositol polyphosphate + H2O = myo-inositol polyphosphate + phosphate.. The enzyme catalyses P(1),P(6)-bis(5'-adenosyl) hexaphosphate + H2O = adenosine 5'-pentaphosphate + AMP + 2 H(+). The catalysed reaction is P(1),P(5)-bis(5'-adenosyl) pentaphosphate + H2O = adenosine 5'-tetraphosphate + AMP + 2 H(+). It carries out the reaction [phosphate](n+1) + n H2O = (n+1) phosphate + n H(+). Functionally, may eliminate potentially toxic dinucleoside polyphosphates during sporulation. Most active against diadenosine 5',5'''-P1,P6-hexaphosphate (Ap6A). Can also hydrolyze diadenosine 5',5'''-P1,P5-pentaphosphate (Ap5A), adenosine 5'-pentaphosphate (p5A), and adenosine 5'-tetraphosphate (p4A) are also substrates, but not diadenosine 5',5'''-P1,P4-tetraphosphate (Ap4A) or other dinucleotides, mononucleotides, nucleotide sugars, or nucleotide alcohols. Also cleaves a beta-phosphate from the diphosphate groups in PP-InsP5 (diphosphoinositol pentakisphosphate) and [PP]2-InsP4 (bisdiphosphoinositol tetrakisphosphate). Also has endopolyphosphatase activity. The polypeptide is Diphosphoinositol polyphosphate phosphohydrolase DDP1 (DDP1) (Saccharomyces cerevisiae (strain ATCC 204508 / S288c) (Baker's yeast)).